Reading from the N-terminus, the 89-residue chain is UPF0237 protein CA_C0478 (89 aa).

In terms of domain architecture, ACT spans 4–78; that stretch reads IITVIGKDKV…KKLGVSIKIQ (75 aa).

Belongs to the UPF0237 family.

This Clostridium acetobutylicum (strain ATCC 824 / DSM 792 / JCM 1419 / IAM 19013 / LMG 5710 / NBRC 13948 / NRRL B-527 / VKM B-1787 / 2291 / W) protein is UPF0237 protein CA_C0478.